The primary structure comprises 192 residues: PTS-dependent dihydroxyacetone kinase, ADP-binding subunit DhaL (192 aa).

The DhaL domain occupies 5–189 (DTTIEWLGKF…SAYLFETLLE (185 aa)). Positions 29, 34, and 36 each coordinate Mg(2+). ADP is bound by residues 37 to 40 (HGAN), 78 to 79 (AS), Gly115, Met124, Arg161, and 174 to 176 (DPG).

In terms of assembly, homodimer. The dihydroxyacetone kinase complex is composed of a homodimer of DhaM, a homodimer of DhaK and the subunit DhaL. It depends on Mg(2+) as a cofactor.

The protein localises to the cytoplasm. It carries out the reaction dihydroxyacetone + phosphoenolpyruvate = dihydroxyacetone phosphate + pyruvate. The protein operates within polyol metabolism; glycerol degradation. Its function is as follows. ADP-binding subunit of the dihydroxyacetone kinase, which is responsible for the phosphoenolpyruvate (PEP)-dependent phosphorylation of dihydroxyacetone. DhaL-ADP is converted to DhaL-ATP via a phosphoryl group transfer from DhaM and transmits it to dihydroxyacetone binds to DhaK. The sequence is that of PTS-dependent dihydroxyacetone kinase, ADP-binding subunit DhaL from Lactococcus lactis subsp. lactis (strain IL1403) (Streptococcus lactis).